The sequence spans 602 residues: Elongation factor 4 (602 aa).

In terms of domain architecture, tr-type G spans 7–189 (ARLRNFCIIA…SVVDRIPPPK (183 aa)). Residues 19 to 24 (DHGKST) and 136 to 139 (NKVD) contribute to the GTP site.

This sequence belongs to the TRAFAC class translation factor GTPase superfamily. Classic translation factor GTPase family. LepA subfamily.

The protein localises to the cell inner membrane. The catalysed reaction is GTP + H2O = GDP + phosphate + H(+). Required for accurate and efficient protein synthesis under certain stress conditions. May act as a fidelity factor of the translation reaction, by catalyzing a one-codon backward translocation of tRNAs on improperly translocated ribosomes. Back-translocation proceeds from a post-translocation (POST) complex to a pre-translocation (PRE) complex, thus giving elongation factor G a second chance to translocate the tRNAs correctly. Binds to ribosomes in a GTP-dependent manner. The sequence is that of Elongation factor 4 from Prochlorococcus marinus (strain SARG / CCMP1375 / SS120).